A 294-amino-acid chain; its full sequence is Phosphatidylserine decarboxylase proenzyme (294 aa).

Active-site charge relay system; for autoendoproteolytic cleavage activity residues include Asp100, His157, and Ser261. The active-site Schiff-base intermediate with substrate; via pyruvic acid; for decarboxylase activity is the Ser261. Pyruvic acid (Ser); by autocatalysis is present on Ser261.

It belongs to the phosphatidylserine decarboxylase family. PSD-B subfamily. Prokaryotic type I sub-subfamily. As to quaternary structure, heterodimer of a large membrane-associated beta subunit and a small pyruvoyl-containing alpha subunit. Pyruvate is required as a cofactor. In terms of processing, is synthesized initially as an inactive proenzyme. Formation of the active enzyme involves a self-maturation process in which the active site pyruvoyl group is generated from an internal serine residue via an autocatalytic post-translational modification. Two non-identical subunits are generated from the proenzyme in this reaction, and the pyruvate is formed at the N-terminus of the alpha chain, which is derived from the carboxyl end of the proenzyme. The autoendoproteolytic cleavage occurs by a canonical serine protease mechanism, in which the side chain hydroxyl group of the serine supplies its oxygen atom to form the C-terminus of the beta chain, while the remainder of the serine residue undergoes an oxidative deamination to produce ammonia and the pyruvoyl prosthetic group on the alpha chain. During this reaction, the Ser that is part of the protease active site of the proenzyme becomes the pyruvoyl prosthetic group, which constitutes an essential element of the active site of the mature decarboxylase.

It is found in the cell membrane. The enzyme catalyses a 1,2-diacyl-sn-glycero-3-phospho-L-serine + H(+) = a 1,2-diacyl-sn-glycero-3-phosphoethanolamine + CO2. The protein operates within phospholipid metabolism; phosphatidylethanolamine biosynthesis; phosphatidylethanolamine from CDP-diacylglycerol: step 2/2. Functionally, catalyzes the formation of phosphatidylethanolamine (PtdEtn) from phosphatidylserine (PtdSer). This chain is Phosphatidylserine decarboxylase proenzyme, found in Histophilus somni (strain 2336) (Haemophilus somnus).